The following is a 96-amino-acid chain: UPF0213 protein Lreu_0682 (96 aa).

In terms of domain architecture, GIY-YIG spans 4–81 (EKYYIYVLYC…KHQTRRQKEK (78 aa)).

Belongs to the UPF0213 family.

In Limosilactobacillus reuteri (strain DSM 20016) (Lactobacillus reuteri), this protein is UPF0213 protein Lreu_0682.